Here is a 288-residue protein sequence, read N- to C-terminus: 4-diphosphocytidyl-2-C-methyl-D-erythritol kinase (288 aa).

Lys-13 is an active-site residue. Residue 96 to 106 (PMGGGIGGGSS) participates in ATP binding. Asp-138 is a catalytic residue.

This sequence belongs to the GHMP kinase family. IspE subfamily.

It catalyses the reaction 4-CDP-2-C-methyl-D-erythritol + ATP = 4-CDP-2-C-methyl-D-erythritol 2-phosphate + ADP + H(+). The protein operates within isoprenoid biosynthesis; isopentenyl diphosphate biosynthesis via DXP pathway; isopentenyl diphosphate from 1-deoxy-D-xylulose 5-phosphate: step 3/6. Functionally, catalyzes the phosphorylation of the position 2 hydroxy group of 4-diphosphocytidyl-2C-methyl-D-erythritol. The protein is 4-diphosphocytidyl-2-C-methyl-D-erythritol kinase of Aliivibrio fischeri (strain ATCC 700601 / ES114) (Vibrio fischeri).